The following is a 229-amino-acid chain: Isopentenyl-diphosphate delta-isomerase (229 aa).

K39 contributes to the substrate binding site. Mg(2+) is bound by residues H43 and H54. The Nudix hydrolase domain maps to 52–202 (LLHRAFSMFI…QYGFTPWFKL (151 aa)). Q72 and K77 together coordinate substrate. Residue C89 is part of the active site. S90 is a substrate binding site. Mg(2+) contacts are provided by E152 and E154. E154 is an active-site residue.

The protein belongs to the IPP isomerase type 1 family. It depends on Mg(2+) as a cofactor.

The protein resides in the cytoplasm. It localises to the nucleus. It carries out the reaction isopentenyl diphosphate = dimethylallyl diphosphate. It functions in the pathway isoprenoid biosynthesis; dimethylallyl diphosphate biosynthesis; dimethylallyl diphosphate from isopentenyl diphosphate: step 1/1. Functionally, isopentenyl-diphosphate delta-isomerase; part of the second module of ergosterol biosynthesis pathway that includes the middle steps of the pathway. Idi1 catalyzes the 1,3-allylic rearrangement of isopentenyl (IPP) to its highly electrophilic allylic isomer, dimethylallyl diphosphate (DMAPP). The second module is carried out in the vacuole and involves the formation of farnesyl diphosphate, which is also an important intermediate in the biosynthesis of ubiquinone, dolichol, heme and prenylated proteins. Activity by the mevalonate kinase erg12 first converts mevalonate into 5-phosphomevalonate. 5-phosphomevalonate is then further converted to 5-diphosphomevalonate by the phosphomevalonate kinase erg8. The diphosphomevalonate decarboxylase mvd1 then produces isopentenyl diphosphate. The isopentenyl-diphosphate delta-isomerase idi1 then catalyzes the 1,3-allylic rearrangement of the homoallylic substrate isopentenyl (IPP) to its highly electrophilic allylic isomer, dimethylallyl diphosphate (DMAPP). Finally the farnesyl diphosphate synthase fps1 catalyzes the sequential condensation of isopentenyl pyrophosphate with dimethylallyl pyrophosphate, and then with the resultant geranylpyrophosphate to the ultimate product farnesyl pyrophosphate. In Schizosaccharomyces pombe (strain 972 / ATCC 24843) (Fission yeast), this protein is Isopentenyl-diphosphate delta-isomerase.